The primary structure comprises 178 residues: PEST proteolytic signal-containing nuclear protein (178 aa).

Basic and acidic residues predominate over residues 1–15 (MADGKAGDEKPEKSQ). Residues 1-82 (MADGKAGDEK…FAIGSQTTKK (82 aa)) form a disordered region. Ala2 carries the post-translational modification N-acetylalanine. The span at 37–47 (SSSNGGESSSR) shows a compositional bias: low complexity. Position 53 is a phosphoserine (Ser53). Lys64 carries the post-translational modification N6-acetyllysine. A phosphoserine mark is found at Ser77, Ser87, and Ser119. The tract at residues 134 to 178 (NIGRDTPTSAGPNSFNKGKHGFSDNQKLWERNIKSHLGNVHDQDN) is disordered. Thr139 bears the Phosphothreonine mark. A compositionally biased stretch (polar residues) spans 139–149 (TPTSAGPNSFN). At Ser147 the chain carries Phosphoserine. An N6-acetyllysine mark is found at Lys150 and Lys152. Residues 160–178 (KLWERNIKSHLGNVHDQDN) are compositionally biased toward basic and acidic residues.

As to quaternary structure, interacts with UHRF2/NIRF. In terms of processing, ubiquitinated; mediated by UHRF2 and leading to its subsequent proteasomal degradation. Post-translationally, N-terminally acetylated in a HYPK-dependent manner by the NatA acetyltransferase complex which is composed of NAA10 and NAA15.

Its subcellular location is the nucleus. In terms of biological role, may be involved in cell cycle regulation. The protein is PEST proteolytic signal-containing nuclear protein (PCNP) of Homo sapiens (Human).